Reading from the N-terminus, the 307-residue chain is Cyclin-dependent kinase 5 activator 1 (307 aa).

The N-myristoyl glycine moiety is linked to residue G2. Residue S8 is modified to Phosphoserine; by CDK5. Residues 97-136 are disordered; that stretch reads TFAQPPPAQPPAPPASQLSGSQTGGSSSVKKAPHPAVTSA. The segment covering 100–110 has biased composition (pro residues); sequence QPPPAQPPAPP. Residues 111–124 show a composition bias toward low complexity; that stretch reads ASQLSGSQTGGSSS. At T138 the chain carries Phosphothreonine; by CDK5.

This sequence belongs to the cyclin-dependent kinase 5 activator family. Heterodimer composed of a catalytic subunit CDK5 and a regulatory subunit CDK5R1 (p25) and macromolecular complex composed of at least CDK5, CDK5R1 (p35) and CDK5RAP1 or CDK5RAP2 or CDK5RAP3. Only the heterodimer shows kinase activity. Interacts with EPHA4 and NGEF; may mediate the activation of NGEF by EPHA4. Interacts with RASGRF2. The complex p35/CDK5 interacts with CLOCK. In terms of processing, the p35 form is proteolytically cleaved by calpain, giving rise to the p25 form. P35 has a 5 to 10 fold shorter half-life compared to p25. The conversion results in deregulation of the CDK5 kinase: p25/CDK5 kinase displays an increased and altered tau phosphorylation in comparison to the p35/CDK5 kinase in vivo. Post-translationally, myristoylated. A proper myristoylation signal is essential for the proper distribution of p35. Ubiquitinated, leading to its degradation: degradation of p35 by proteasome results in down-regulation of CDK5 activity. During this process, CDK5 phosphorylates p35 and induces its ubiquitination and subsequent degradation. Ubiquitinated by the CRL2(FEM1B) complex, which recognizes the -Gly-Leu-Asp-Arg C-degron at the C-terminus, leading to its degradation. In terms of processing, phosphorylation at Ser-8 and Thr-138 by CDK5 prevents calpain-mediated proteolysis. As to expression, brain and neuron specific.

Its subcellular location is the cell membrane. The protein resides in the cell projection. The protein localises to the neuron projection. It is found in the nucleus. It localises to the cytoplasm. Its subcellular location is the perinuclear region. The protein resides in the perikaryon. Functionally, p35 is a neuron specific activator of CDK5. The complex p35/CDK5 is required for neurite outgrowth and cortical lamination. Involved in dendritic spine morphogenesis by mediating the EFNA1-EPHA4 signaling. Activator of TPKII. The complex p35/CDK5 participates in the regulation of the circadian clock by modulating the function of CLOCK protein: phosphorylates CLOCK at 'Thr-451' and 'Thr-461' and regulates the transcriptional activity of the CLOCK-BMAL1 heterodimer in association with altered stability and subcellular distribution. The polypeptide is Cyclin-dependent kinase 5 activator 1 (CDK5R1) (Homo sapiens (Human)).